A 554-amino-acid polypeptide reads, in one-letter code: MKEQLRACILKGIEGCFADGTLTSGEVPAINVEKPAHAEHGDFATNVAMQMAKQQRKAPRAVAEILVAKLAGASDLIESLEIAGPGFINFFIKDSAWRRTLTEIDRAGDAWGKSGIGRGKKVQVEFVSANPTGPLHIGHGRGAATGDAVASLLSAAGFDVQREYYINDAGNQMNTLGLSGLLRYKELLGEKIDFPETCYQGDYMKDIARDAVTKYGDRFLKVSQEDGVAFFSKMGGDLILAGIDQDLQDFGIRFDHWFSEQSLFDEGKVKSAIEEMQAKGLIYEQEGALWFRTTDYGDDKDRVVVRSNGVTTYFASDIAYHRDKFARGFDWVIDVWGADHHGYVPRLKSVVQGLGRDASDLGIILVQLVSLLRDGVPVAMSTRSGEFVTLKEVVDEVGRDAARFFFLMRRSDSQLDFDLELAKRQSNDNPVYYVQYAHARIKSIFDTARERGVEPRFDSVKLELLQTPEDLSLVKKLSVYPEILEGGAVNFEPHRITYYLQELAGEFHSFYNKSRVITPEEPELTQARLFLLHCVAITLKNALTVLGISAPERM.

Residues 129-139 (ANPTGPLHIGH) carry the 'HIGH' region motif.

The protein belongs to the class-I aminoacyl-tRNA synthetase family. In terms of assembly, monomer.

It is found in the cytoplasm. It carries out the reaction tRNA(Arg) + L-arginine + ATP = L-arginyl-tRNA(Arg) + AMP + diphosphate. The chain is Arginine--tRNA ligase from Citrifermentans bemidjiense (strain ATCC BAA-1014 / DSM 16622 / JCM 12645 / Bem) (Geobacter bemidjiensis).